The primary structure comprises 143 residues: Large ribosomal subunit protein uL16c (143 aa).

Belongs to the universal ribosomal protein uL16 family. In terms of assembly, part of the 50S ribosomal subunit.

The protein resides in the plastid. The protein localises to the chloroplast. In Spirogyra maxima (Green alga), this protein is Large ribosomal subunit protein uL16c.